Reading from the N-terminus, the 181-residue chain is Adenylyl-sulfate kinase (181 aa).

12-19 (GLSGAGKS) lines the ATP pocket. S86 functions as the Phosphoserine intermediate in the catalytic mechanism.

Belongs to the APS kinase family.

The catalysed reaction is adenosine 5'-phosphosulfate + ATP = 3'-phosphoadenylyl sulfate + ADP + H(+). It participates in sulfur metabolism; hydrogen sulfide biosynthesis; sulfite from sulfate: step 2/3. Its function is as follows. Catalyzes the synthesis of activated sulfate. This Microcystis aeruginosa (strain NIES-843 / IAM M-2473) protein is Adenylyl-sulfate kinase.